Consider the following 357-residue polypeptide: MEVVSQIDQENQAIIWKQIYGFSESLLLKCAVQCEIAETIHNHGTPMSILELAAKLPIDQPVNIDRLYRVMRYLVHQKLFNKEVISTLNGGTVQVTEKYWLAPPAKYLIRGSQQSMVPSVLGIIDEDMFAPWHILKDSLTGECNIFETALGKSISVYMSENPEMNQISNGAMAFDSGLVTSHLVNECKSVFGDEIKTLVDVGGGTGTALRAISKAFPNIKCTLFDLPHVIADSPEIPTITKVSGDMFKSIPSADAIFMKNILHDWNDDECIQILKRCKDVVSAGGKLIMVEMVLDEDSFHPYSKLRLTSDIDMMVNNGGKERTEKEWEKLFDAAGFASCKFTQMSVGFAAQSIIEVY.

D225 serves as a coordination point for S-adenosyl-L-methionine. The active-site Proton acceptor is H263.

This sequence belongs to the class I-like SAM-binding methyltransferase superfamily. Cation-independent O-methyltransferase family. In terms of tissue distribution, expressed instems, leaves, roots and seedlings.

Its function is as follows. Involved in the biosynthesis of benzylisoquinoline alkaloids. Catalyzes specifically the methylation of norreticuline at position seven to produce norlaudanine. No activity with norcoclaurine, reticuline, norlaudanosoline, norisoorientaline, scoulerine, salutaridinol, oripavine, salsolinol, codeine or morphine. Involved in papaverine biosynthesis. The sequence is that of Norreticuline-7-O-methyltransferase from Papaver somniferum (Opium poppy).